The following is an 883-amino-acid chain: Protein P (883 aa).

The terminal protein domain (TP) stretch occupies residues 1 to 183 (MHPFSRLFRN…GKPYSWEHRQ (183 aa)). A spacer region spans residues 184–386 (LVQHNGQQHK…YCIHHIVSSL (203 aa)). The interval 298-344 (RNSGHTTWFSSASNSNKSRSREKAYSSNSTSKRYSPPLNYEKSDFSS) is disordered. Residues 387–728 (DDWGPCTVTG…YEELWPVVRQ (342 aa)) are polymerase/reverse transcriptase domain (RT). A Reverse transcriptase domain is found at 397 to 638 (DVTIKSPRTP…NHLHFMGYVI (242 aa)). Positions 469, 589, and 590 each coordinate Mg(2+).

It belongs to the hepadnaviridae P protein family.

The catalysed reaction is DNA(n) + a 2'-deoxyribonucleoside 5'-triphosphate = DNA(n+1) + diphosphate. It carries out the reaction Endonucleolytic cleavage to 5'-phosphomonoester.. Activated by host HSP70 and HSP40 in vitro to be able to bind the epsilon loop of the pgRNA. Because deletion of the RNase H region renders the protein partly chaperone-independent, the chaperones may be needed indirectly to relieve occlusion of the RNA-binding site by this domain. Inhibited by several reverse-transcriptase inhibitors: Lamivudine, Adefovir and Entecavir. Functionally, multifunctional enzyme that converts the viral RNA genome into dsDNA in viral cytoplasmic capsids. This enzyme displays a DNA polymerase activity that can copy either DNA or RNA templates, and a ribonuclease H (RNase H) activity that cleaves the RNA strand of RNA-DNA heteroduplexes in a partially processive 3'- to 5'-endonucleasic mode. Neo-synthesized pregenomic RNA (pgRNA) are encapsidated together with the P protein, and reverse-transcribed inside the nucleocapsid. Initiation of reverse-transcription occurs first by binding the epsilon loop on the pgRNA genome, and is initiated by protein priming, thereby the 5'-end of (-)DNA is covalently linked to P protein. Partial (+)DNA is synthesized from the (-)DNA template and generates the relaxed circular DNA (RC-DNA) genome. After budding and infection, the RC-DNA migrates in the nucleus, and is converted into a plasmid-like covalently closed circular DNA (cccDNA). The activity of P protein does not seem to be necessary for cccDNA generation, and is presumably released from (+)DNA by host nuclear DNA repair machinery. The polypeptide is Protein P (Woodchuck hepatitis B virus (isolate 2) (WHV)).